We begin with the raw amino-acid sequence, 205 residues long: Endoribonuclease YbeY (205 aa).

Residues H124, H128, and H134 each contribute to the Zn(2+) site. A disordered region spans residues 162 to 205 (GTAPVAPGGEAQVPNEALETSGKRQDHSLGEILPGGMSRRLAGS).

The protein belongs to the endoribonuclease YbeY family. It depends on Zn(2+) as a cofactor.

Its subcellular location is the cytoplasm. Functionally, single strand-specific metallo-endoribonuclease involved in late-stage 70S ribosome quality control and in maturation of the 3' terminus of the 16S rRNA. The sequence is that of Endoribonuclease YbeY from Beijerinckia indica subsp. indica (strain ATCC 9039 / DSM 1715 / NCIMB 8712).